The following is a 476-amino-acid chain: G-patch domain and KOW motifs-containing protein (476 aa).

The interval 1–96 is disordered; the sequence is MADSKEGVLP…PGPSTDTGAL (96 aa). Ala2 bears the N-acetylalanine mark. Lys5 is covalently cross-linked (Glycyl lysine isopeptide (Lys-Gly) (interchain with G-Cter in SUMO2)). Positions 13–26 are enriched in polar residues; that stretch reads AASTAPISFGFTRT. A Phosphoserine; by PKA modification is found at Ser27. Phosphoserine is present on residues Ser35 and Ser42. Residues 43–58 show a composition bias toward basic and acidic residues; it reads PEEKDFLKTVEGRELQ. Residue Ser115 is modified to Phosphoserine. Residues 164-210 enclose the G-patch domain; it reads VEAYGLAMLRGMGWKPGEGIGRTFNQVVKPRVNSLRPKGLGLGANLT. The segment at 203-244 is disordered; it reads LGLGANLTEAQALTPTGPSRMPRPDEEQEKDKEDQPQGLVPG. Over residues 210–219 the composition is skewed to polar residues; that stretch reads TEAQALTPTG. Position 216 is a phosphothreonine (Thr216). A compositionally biased stretch (basic and acidic residues) spans 224–237; the sequence is PRPDEEQEKDKEDQ. The KOW 1 domain occupies 240–267; that stretch reads GLVPGGAVVVLSGPHRGLYGKVEGLDPD. Phosphothreonine; by PKA is present on Thr316. The disordered stretch occupies residues 327–353; it reads DNSERKRKHLPDRQDGPAAKSEKAAPR. Positions 337 to 351 are enriched in basic and acidic residues; sequence PDRQDGPAAKSEKAA. The 28-residue stretch at 415 to 442 folds into the KOW 2 domain; that stretch reads PKAEGDRVMVVLGPQTGRVGHLLSRDRA. Residue Ser471 is modified to Phosphoserine. Thr473 carries the phosphothreonine modification.

This sequence belongs to the MOS2 family. In terms of assembly, component of the minor spliceosome, which splices U12-type introns. Interacts with PRKX. Interacts with DHX16. Interacts with PRKACB. Phosphorylation regulates its ability to bind RNA.

It localises to the nucleus. In terms of biological role, RNA-binding protein involved in pre-mRNA splicing. As a component of the minor spliceosome, involved in the splicing of U12-type introns in pre-mRNAs. This Homo sapiens (Human) protein is G-patch domain and KOW motifs-containing protein (GPKOW).